The primary structure comprises 100 residues: Large ribosomal subunit protein bL27 (100 aa).

The propeptide occupies 1–9 (MLVMNLQLF).

Belongs to the bacterial ribosomal protein bL27 family. The N-terminus is cleaved by ribosomal processing cysteine protease Prp.

In Clostridium botulinum (strain 657 / Type Ba4), this protein is Large ribosomal subunit protein bL27.